A 362-amino-acid chain; its full sequence is Phospho-N-acetylmuramoyl-pentapeptide-transferase (362 aa).

A run of 10 helical transmembrane segments spans residues 28-48, 73-93, 100-120, 134-154, 169-189, 201-221, 241-261, 264-284, 290-310, and 339-359; these read GATV…IALL, TPTM…LLWA, VWIV…DDYL, VKLF…VLVS, TLLI…IVGS, GLAI…VYLV, LAVF…YNAP, MVFM…AIAV, LVLA…IVQV, and TVVV…LATL.

Belongs to the glycosyltransferase 4 family. MraY subfamily. The cofactor is Mg(2+).

The protein resides in the cell inner membrane. The catalysed reaction is UDP-N-acetyl-alpha-D-muramoyl-L-alanyl-gamma-D-glutamyl-meso-2,6-diaminopimeloyl-D-alanyl-D-alanine + di-trans,octa-cis-undecaprenyl phosphate = di-trans,octa-cis-undecaprenyl diphospho-N-acetyl-alpha-D-muramoyl-L-alanyl-D-glutamyl-meso-2,6-diaminopimeloyl-D-alanyl-D-alanine + UMP. It participates in cell wall biogenesis; peptidoglycan biosynthesis. Functionally, catalyzes the initial step of the lipid cycle reactions in the biosynthesis of the cell wall peptidoglycan: transfers peptidoglycan precursor phospho-MurNAc-pentapeptide from UDP-MurNAc-pentapeptide onto the lipid carrier undecaprenyl phosphate, yielding undecaprenyl-pyrophosphoryl-MurNAc-pentapeptide, known as lipid I. In Parvibaculum lavamentivorans (strain DS-1 / DSM 13023 / NCIMB 13966), this protein is Phospho-N-acetylmuramoyl-pentapeptide-transferase.